The chain runs to 196 residues: Peptide methionine sulfoxide reductase (196 aa).

Positions 1–14 are enriched in polar residues; sequence MEGNNSSSKSTTNP. The tract at residues 1–23 is disordered; that stretch reads MEGNNSSSKSTTNPALDPDLDSP.

It belongs to the MsrA Met sulfoxide reductase family.

It catalyses the reaction L-methionyl-[protein] + [thioredoxin]-disulfide + H2O = L-methionyl-(S)-S-oxide-[protein] + [thioredoxin]-dithiol. It carries out the reaction [thioredoxin]-disulfide + L-methionine + H2O = L-methionine (S)-S-oxide + [thioredoxin]-dithiol. Functionally, has an important function as a repair enzyme for proteins that have been inactivated by oxidation. Catalyzes the reversible oxidation-reduction of methionine sulfoxide in proteins to methionine. The protein is Peptide methionine sulfoxide reductase (E4) of Solanum lycopersicum (Tomato).